The chain runs to 264 residues: Myozenin-2 (264 aa).

R53 is modified (omega-N-methylarginine). The disordered stretch occupies residues 90-135; the sequence is GRVDGSNLEGGSQQGPSTPPNTPDPRSPPNPENIAPGYSGPLKEIP. Position 101 is a phosphoserine (S101). Pro residues predominate over residues 106-120; it reads STPPNTPDPRSPPNP. Phosphothreonine is present on residues T107 and T111. The residue at position 116 (S116) is a Phosphoserine.

This sequence belongs to the myozenin family. As to quaternary structure, interacts via its C-terminus with spectrin repeats 3 and 4 of ACTN2. Interacts with ACTN1, LDB3, MYOT and PPP3CA. As to expression, expressed specifically in heart and skeletal muscle. In skeletal muscle, localized to the soleus and plantaris muscles, which are predominantly composed of slow-twitch fibers.

The protein resides in the cytoplasm. It is found in the myofibril. Its subcellular location is the sarcomere. The protein localises to the z line. Myozenins may serve as intracellular binding proteins involved in linking Z line proteins such as alpha-actinin, gamma-filamin, TCAP/telethonin, LDB3/ZASP and localizing calcineurin signaling to the sarcomere. Plays an important role in the modulation of calcineurin signaling. May play a role in myofibrillogenesis. The chain is Myozenin-2 from Mus musculus (Mouse).